We begin with the raw amino-acid sequence, 1394 residues long: Adhesion and penetration protein autotransporter (1394 aa).

Positions 1–25 (MKKTVFRLNFLTACISLGIVSQAWA) are cleaved as a signal peptide. In terms of domain architecture, Peptidase S6 spans 26–286 (GHTYFGIDYQ…QLVRKSYFDE (261 aa)). The active site involves Ser-243. Disordered regions lie at residues 848–870 (AYSA…TPTS) and 995–1027 (TLEA…FPDT). An Autotransporter domain is found at 1140 to 1394 (VDQAQSAVWT…NVGVKLGYRW (255 aa)).

It localises to the periplasm. The protein localises to the secreted. It is found in the cell surface. The protein resides in the cell outer membrane. Its function is as follows. Probable protease; promotes adherence and invasion by directly binding to a host cell structure. The polypeptide is Adhesion and penetration protein autotransporter (hap) (Haemophilus influenzae).